A 369-amino-acid polypeptide reads, in one-letter code: Mitogen-activated protein kinase 11 (369 aa).

In terms of domain architecture, Protein kinase spans 40–326 (VPPLRPIGRG…VDEALCHPYL (287 aa)). ATP is bound by residues 46-54 (IGRGASGIV) and K69. The active-site Proton acceptor is D166. At T198 the chain carries Phosphothreonine. The short motif at 198–200 (TEY) is the TXY element. The residue at position 200 (Y200) is a Phosphotyrosine. The residue at position 203 (T203) is a Phosphothreonine.

The protein belongs to the protein kinase superfamily. CMGC Ser/Thr protein kinase family. MAP kinase subfamily. In terms of assembly, interacts with MKK1, MKK2 and MKK6. In terms of processing, dually phosphorylated on Thr-198 and Tyr-200, which activates the enzyme.

It carries out the reaction L-seryl-[protein] + ATP = O-phospho-L-seryl-[protein] + ADP + H(+). The enzyme catalyses L-threonyl-[protein] + ATP = O-phospho-L-threonyl-[protein] + ADP + H(+). With respect to regulation, activated by threonine and tyrosine phosphorylation. The polypeptide is Mitogen-activated protein kinase 11 (MPK11) (Arabidopsis thaliana (Mouse-ear cress)).